The chain runs to 389 residues: Galactokinase (389 aa).

A substrate-binding site is contributed by 34–37 (EHTD). ATP contacts are provided by residues S68 and 125–131 (GSGLSSS). Mg(2+) is bound by residues S131 and E163. The Proton acceptor role is filled by D175. Position 225 (Y225) interacts with substrate.

The protein belongs to the GHMP kinase family. GalK subfamily.

It localises to the cytoplasm. It catalyses the reaction alpha-D-galactose + ATP = alpha-D-galactose 1-phosphate + ADP + H(+). The protein operates within carbohydrate metabolism; galactose metabolism. Its function is as follows. Catalyzes the transfer of the gamma-phosphate of ATP to D-galactose to form alpha-D-galactose-1-phosphate (Gal-1-P). This chain is Galactokinase, found in Clostridium beijerinckii (strain ATCC 51743 / NCIMB 8052) (Clostridium acetobutylicum).